The chain runs to 312 residues: Zinc finger protein-like 1 (312 aa).

The B box-type; degenerate zinc-finger motif lies at 1–43 (MGLCKCPKRKVTNLFCFEHRVNVCEHCLVANHAKCIVQSYLQW). At 1-268 (MGLCKCPKRK…RPLTLLQRAG (268 aa)) the chain is on the cytoplasmic side. The RING-type; degenerate zinc-finger motif lies at 53 to 101 (CRLCNIPLAARETTRLICYDLFHWACLNERAAQLPRNTAPAGYQCPSCS). The disordered stretch occupies residues 144-233 (EPEPLNTSEF…RAPGLHRDCD (90 aa)). Positions 148–173 (LNTSEFSDWSSFNASGSPEQEETASA) are enriched in polar residues. Over residues 215-233 (KVYDTRDDERAPGLHRDCD) the composition is skewed to basic and acidic residues. A helical transmembrane segment spans residues 269-289 (LLLLLGLLGFLALLALMSRLG). At 290 to 312 (RAAADSDPNLDPLMNPHIRVGPS) the chain is on the lumenal side.

This sequence belongs to the ZFPL1 family. As to quaternary structure, interacts with GOLGA2/GM130. Post-translationally, phosphorylated.

The protein localises to the golgi apparatus. The protein resides in the cis-Golgi network membrane. In terms of biological role, required for cis-Golgi integrity and efficient ER to Golgi transport. Involved in the maintenance of the integrity of the cis-Golgi, possibly via its interaction with GOLGA2/GM130. This Bos taurus (Bovine) protein is Zinc finger protein-like 1 (ZFPL1).